Here is a 141-residue protein sequence, read N- to C-terminus: Large ribosomal subunit protein uL11 (141 aa).

Belongs to the universal ribosomal protein uL11 family. Part of the ribosomal stalk of the 50S ribosomal subunit. Interacts with L10 and the large rRNA to form the base of the stalk. L10 forms an elongated spine to which L12 dimers bind in a sequential fashion forming a multimeric L10(L12)X complex. One or more lysine residues are methylated.

In terms of biological role, forms part of the ribosomal stalk which helps the ribosome interact with GTP-bound translation factors. This Lacticaseibacillus casei (strain BL23) (Lactobacillus casei) protein is Large ribosomal subunit protein uL11.